A 664-amino-acid polypeptide reads, in one-letter code: Putative peroxisomal acyl-coenzyme A oxidase 1.2 (664 aa).

FAD is bound at residue 399–404 (CGGHGY). Residues 662-664 (AKL) carry the Microbody targeting signal motif.

It belongs to the acyl-CoA oxidase family. FAD is required as a cofactor.

The protein resides in the peroxisome. The catalysed reaction is a 2,3-saturated acyl-CoA + O2 = a (2E)-enoyl-CoA + H2O2. Functionally, catalyzes the desaturation of acyl-CoAs to 2-trans-enoyl-CoAs. In Arabidopsis thaliana (Mouse-ear cress), this protein is Putative peroxisomal acyl-coenzyme A oxidase 1.2 (ACX1.2).